We begin with the raw amino-acid sequence, 215 residues long: Cytochrome b6 (215 aa).

A helical transmembrane segment spans residues 32-52 (IFYCLGGITFTSFLVQVATGF). C35 lines the heme c pocket. Residues H86 and H100 each contribute to the heme b site. A run of 3 helical transmembrane segments spans residues 90–110 (ASMM…TGGF), 116–136 (LTWV…VTGY), and 186–206 (LHTF…FLMI). 2 residues coordinate heme b: H187 and H202.

It belongs to the cytochrome b family. PetB subfamily. As to quaternary structure, the 4 large subunits of the cytochrome b6-f complex are cytochrome b6, subunit IV (17 kDa polypeptide, PetD), cytochrome f and the Rieske protein, while the 4 small subunits are PetG, PetL, PetM and PetN. The complex functions as a dimer. Heme b is required as a cofactor. It depends on heme c as a cofactor.

The protein localises to the plastid. It localises to the chloroplast thylakoid membrane. In terms of biological role, component of the cytochrome b6-f complex, which mediates electron transfer between photosystem II (PSII) and photosystem I (PSI), cyclic electron flow around PSI, and state transitions. The chain is Cytochrome b6 from Oltmannsiellopsis viridis (Marine flagellate).